Consider the following 656-residue polypeptide: Nexilin (656 aa).

3 disordered regions span residues 1–131 (MNDV…IEQD), 165–198 (RAAA…EEEC), and 215–284 (TEAK…VFKE). The segment covering 11–26 (LLSSSKPVPKSYVPKL) has biased composition (low complexity). Residues 27-78 (GKGDVKDKFEAMQRAREERNQRRSRDEKQRRKEQYIREREWNRRKQEIKDML) show a composition bias toward basic and acidic residues. Ser-80 is modified (phosphoserine). 3 stretches are compositionally biased toward basic and acidic residues: residues 103–131 (GKFD…IEQD), 169–198 (NRKD…EEEC), and 216–269 (EAKK…RNMV). Residues Ser-221, Ser-330, Ser-337, and Ser-345 each carry the phosphoserine modification. A Phosphothreonine modification is found at Thr-350. Disordered stretches follow at residues 468 to 492 (NFHE…HKVN) and 529 to 564 (AALQ…APWF). A phosphoserine mark is found at Ser-544 and Ser-549. Phosphothreonine is present on Thr-551. The 89-residue stretch at 562–650 (PWFKKPLRNT…GSAASTCILT (89 aa)) folds into the Ig-like domain.

As to quaternary structure, interacts with F-actin. In terms of tissue distribution, expressed in brain, testis, spleen and fibroblasts (at protein level). Not detected in liver, kidney or epithelial cells (at protein level).

It is found in the cytoplasm. The protein localises to the cytoskeleton. It localises to the cell junction. The protein resides in the adherens junction. Its subcellular location is the myofibril. It is found in the sarcomere. The protein localises to the z line. In terms of biological role, involved in regulating cell migration through association with the actin cytoskeleton. Has an essential role in the maintenance of Z line and sarcomere integrity. This chain is Nexilin, found in Rattus norvegicus (Rat).